The sequence spans 349 residues: Isopentenyl-diphosphate delta-isomerase (349 aa).

A substrate-binding site is contributed by 6–7; the sequence is RK. FMN-binding positions include 62 to 64, serine 93, and asparagine 122; that span reads AMT. Residue glutamine 152 participates in substrate binding. Glutamate 153 provides a ligand contact to Mg(2+). Residues lysine 184, threonine 214, 258 to 259, and 280 to 281 each bind FMN; these read GG and AG.

It belongs to the IPP isomerase type 2 family. Homooctamer. Dimer of tetramers. FMN is required as a cofactor. Requires NADPH as cofactor. The cofactor is Mg(2+).

The protein localises to the cytoplasm. It catalyses the reaction isopentenyl diphosphate = dimethylallyl diphosphate. Involved in the biosynthesis of isoprenoids. Catalyzes the 1,3-allylic rearrangement of the homoallylic substrate isopentenyl (IPP) to its allylic isomer, dimethylallyl diphosphate (DMAPP). The sequence is that of Isopentenyl-diphosphate delta-isomerase from Bacillus anthracis (strain A0248).